A 65-amino-acid polypeptide reads, in one-letter code: Large ribosomal subunit protein bL35 (65 aa).

Residues 1 to 51 (MPKMKTNRAAAKRFKKTANGGLKSANAYTSHRFHGKTKKQRRQLRGTDMMD) form a disordered region. The span at 31 to 44 (HRFHGKTKKQRRQL) shows a compositional bias: basic residues.

This sequence belongs to the bacterial ribosomal protein bL35 family.

The sequence is that of Large ribosomal subunit protein bL35 from Pediococcus pentosaceus (strain ATCC 25745 / CCUG 21536 / LMG 10740 / 183-1w).